The following is a 259-amino-acid chain: Global transcriptional regulator CodY (259 aa).

Residues 1–155 (MSLLSRMRKI…GATVVGMEIL (155 aa)) form a GAF domain region. Residues 203–222 (ASKIADRVGITRSVIVNALR) constitute a DNA-binding region (H-T-H motif). Ser215 bears the Phosphoserine mark.

Belongs to the CodY family.

It is found in the cytoplasm. In terms of biological role, DNA-binding global transcriptional regulator which is involved in the adaptive response to starvation and acts by directly or indirectly controlling the expression of numerous genes in response to nutrient availability. During rapid exponential growth, CodY is highly active and represses genes whose products allow adaptation to nutrient depletion. This chain is Global transcriptional regulator CodY, found in Halalkalibacterium halodurans (strain ATCC BAA-125 / DSM 18197 / FERM 7344 / JCM 9153 / C-125) (Bacillus halodurans).